The sequence spans 511 residues: Probable DNA ligase (511 aa).

Residue Glu208 coordinates ATP. Lys210 functions as the N6-AMP-lysine intermediate in the catalytic mechanism. Positions 215, 230, 259, 299, 377, and 383 each coordinate ATP.

The protein belongs to the ATP-dependent DNA ligase family. The cofactor is Mg(2+).

The catalysed reaction is ATP + (deoxyribonucleotide)n-3'-hydroxyl + 5'-phospho-(deoxyribonucleotide)m = (deoxyribonucleotide)n+m + AMP + diphosphate.. Functionally, DNA ligase that seals nicks in double-stranded DNA during DNA replication, DNA recombination and DNA repair. The polypeptide is Probable DNA ligase (Streptomyces griseus subsp. griseus (strain JCM 4626 / CBS 651.72 / NBRC 13350 / KCC S-0626 / ISP 5235)).